The following is a 279-amino-acid chain: Pantothenate synthetase (279 aa).

Position 26-33 (26-33 (MGNLHDGH)) interacts with ATP. H33 functions as the Proton donor in the catalytic mechanism. Q57 serves as a coordination point for (R)-pantoate. Residue Q57 coordinates beta-alanine. Position 144-147 (144-147 (GKKD)) interacts with ATP. Residue Q150 participates in (R)-pantoate binding. An ATP-binding site is contributed by 181 to 184 (LSSR).

It belongs to the pantothenate synthetase family. Homodimer.

It is found in the cytoplasm. The enzyme catalyses (R)-pantoate + beta-alanine + ATP = (R)-pantothenate + AMP + diphosphate + H(+). The protein operates within cofactor biosynthesis; (R)-pantothenate biosynthesis; (R)-pantothenate from (R)-pantoate and beta-alanine: step 1/1. Catalyzes the condensation of pantoate with beta-alanine in an ATP-dependent reaction via a pantoyl-adenylate intermediate. This chain is Pantothenate synthetase, found in Herminiimonas arsenicoxydans.